A 292-amino-acid chain; its full sequence is Porphobilinogen deaminase (292 aa).

Residue C235 is modified to S-(dipyrrolylmethanemethyl)cysteine.

This sequence belongs to the HMBS family. As to quaternary structure, monomer. Requires dipyrromethane as cofactor.

The enzyme catalyses 4 porphobilinogen + H2O = hydroxymethylbilane + 4 NH4(+). Its pathway is porphyrin-containing compound metabolism; protoporphyrin-IX biosynthesis; coproporphyrinogen-III from 5-aminolevulinate: step 2/4. Functionally, tetrapolymerization of the monopyrrole PBG into the hydroxymethylbilane pre-uroporphyrinogen in several discrete steps. The chain is Porphobilinogen deaminase from Acetivibrio thermocellus (strain ATCC 27405 / DSM 1237 / JCM 9322 / NBRC 103400 / NCIMB 10682 / NRRL B-4536 / VPI 7372) (Clostridium thermocellum).